The chain runs to 309 residues: Ras-like protein 1 (309 aa).

GTP-binding positions include 20 to 25 (GVGKSA), 36 to 42 (VDEYDPT), 66 to 67 (AG), 123 to 126 (NKLD), and 153 to 155 (SAK). The short motif at 39 to 47 (YDPTIEDSY) is the Effector region element. The segment at 177–303 (KYNSMNRQLD…SANARKESSG (127 aa)) is disordered. Composition is skewed to polar residues over residues 179 to 188 (NSMNRQLDNT) and 209 to 235 (NGSYVLDNSLTNAGTGSSSKSAVNHNG). Positions 236–245 (ETTKRTDEKN) are enriched in basic and acidic residues. Positions 246-256 (YVNQNNNNEGN) are enriched in low complexity. Polar residues predominate over residues 257-296 (TKYSSNGNGNRSDISRGNQNNALNSRSKQSAEPQKNSSAN). Cys305 carries the S-palmitoyl cysteine lipid modification. Cysteine methyl ester is present on Cys306. Cys306 is lipidated: S-farnesyl cysteine. Residues 307–309 (IIC) constitute a propeptide, removed in mature form.

Belongs to the small GTPase superfamily. Ras family. In terms of processing, farnesylated by RAM1-RAM2, which is required for targeting RAS1 to the cytoplasmic site of the endoplasmic reticulum, where proteolytic processing of the C-terminus by RCE1 and methylation of the resulting carboxyl group by STE14 occurs. Palmitoylated by the ERF2-SHR5 complex, which is required for proper plasma membrane localization of RAS1.

The protein resides in the cell membrane. It carries out the reaction GTP + H2O = GDP + phosphate + H(+). Its activity is regulated as follows. Alternates between an inactive form bound to GDP and an active form bound to GTP. Activated by guanine nucleotide-exchange factor (GEF) CDC25 and inactivated by GTPase-activating proteins (GAPs) IRA1 and IRA2. Its function is as follows. The S.cerevisiae Ras proteins modulate the activity of the adenylate cyclase catalytic subunit and therefore affect the biosynthesis of cyclic-AMP. The polypeptide is Ras-like protein 1 (RAS1) (Saccharomyces cerevisiae (strain ATCC 204508 / S288c) (Baker's yeast)).